A 566-amino-acid polypeptide reads, in one-letter code: KsdD-like steroid dehydrogenase MT0809 (566 aa).

23 to 54 (DAIVVGAGLAGLVAACELADRGLRVLILDQEN) is a binding site for FAD.

It belongs to the FAD-dependent oxidoreductase 2 family. It depends on FAD as a cofactor.

It participates in lipid metabolism; steroid biosynthesis. Functionally, able to catalyze the elimination of the C-1 and C-2 hydrogen atoms of the A-ring from the polycyclic ring structure of 3-ketosteroids. This chain is KsdD-like steroid dehydrogenase MT0809, found in Mycobacterium tuberculosis (strain CDC 1551 / Oshkosh).